Here is a 153-residue protein sequence, read N- to C-terminus: Neuromedin-S (153 aa).

The first 26 residues, 1-26 (MKHLRPQFPLILAIYCFCMLQIPSSG), serve as a signal peptide directing secretion. Propeptides lie at residues 27 to 69 (FPQP…IYKR), 70 to 105 (FLFHYSRTQEATHPVKTGFPPVHPLMHLAAKLANRR), and 106 to 108 (MKR). Position 141 is an asparagine amide (N141). The propeptide occupies 144-153 (NIEDEAQIQW).

The protein belongs to the NmU family.

It is found in the secreted. Its function is as follows. Implicated in the regulation of circadian rhythms through autocrine and/or paracrine actions. The sequence is that of Neuromedin-S (NMS) from Homo sapiens (Human).